The following is a 289-amino-acid chain: Rhodopsin (289 aa).

Over 1–7 (YLVNPAA) the chain is Extracellular. A helical membrane pass occupies residues 8 to 32 (YAALGAYMFLLILIGFPVNFLTLYV). At 33-44 (TIEHKKLRTPLN) the chain is on the cytoplasmic side. A helical membrane pass occupies residues 45-67 (YILLNLAVANLFMVLGGFTTTMY). Topologically, residues 68-81 (TSMHGYFVLGRLGC) are extracellular. The cysteines at positions 81 and 158 are disulfide-linked. Residues 82–104 (NLEGFFATMGGEIALWSLVVLAI) traverse the membrane as a helical segment. The 'Ionic lock' involved in activated form stabilization signature appears at 105–107 (ERW). Topologically, residues 105-123 (ERWIVVCKPISNFRFTEDH) are cytoplasmic. A helical transmembrane segment spans residues 124–144 (AIMGLAFTWVMALSCAVPPLV). Topologically, residues 145–173 (GWSRYIPEGMQCSCGVDYYTRAEGFNNES) are extracellular. The N-linked (GlcNAc...) asparagine glycan is linked to Asn171. A helical transmembrane segment spans residues 174-195 (FVIYMFIVHFLTPLIIISFCYG). Over 196 to 223 (RLLCAVKEAAAAQQESETTQRAEREVSR) the chain is Cytoplasmic. The chain crosses the membrane as a helical span at residues 224–245 (MVVMMVISFLMCWLPYASVAWY). The Extracellular portion of the chain corresponds to 246-257 (IFCNQGSEFGPI). Residues 258-279 (FMTLPAFFAKSSAIYNPLIYIC) traverse the membrane as a helical segment. Lys267 carries the post-translational modification N6-(retinylidene)lysine. The Cytoplasmic portion of the chain corresponds to 280-289 (MNKQFRHCMI).

Belongs to the G-protein coupled receptor 1 family. Opsin subfamily. In terms of processing, phosphorylated on some or all of the serine and threonine residues present in the C-terminal region. Post-translationally, contains one covalently linked retinal chromophore.

Its subcellular location is the membrane. It is found in the cell projection. The protein localises to the cilium. It localises to the photoreceptor outer segment. Photoreceptor required for image-forming vision at low light intensity. While most salt water fish species use retinal as chromophore, most freshwater fish use 3-dehydroretinal, or a mixture of retinal and 3-dehydroretinal. Light-induced isomerization of 11-cis to all-trans retinal triggers a conformational change that activates signaling via G-proteins. Subsequent receptor phosphorylation mediates displacement of the bound G-protein alpha subunit by arrestin and terminates signaling. This Cottocomephorus inermis (Longfin Baikal sculpin) protein is Rhodopsin (rho).